We begin with the raw amino-acid sequence, 292 residues long: GTP cyclohydrolase FolE2 (292 aa).

It belongs to the GTP cyclohydrolase IV family.

It catalyses the reaction GTP + H2O = 7,8-dihydroneopterin 3'-triphosphate + formate + H(+). It participates in cofactor biosynthesis; 7,8-dihydroneopterin triphosphate biosynthesis; 7,8-dihydroneopterin triphosphate from GTP: step 1/1. Converts GTP to 7,8-dihydroneopterin triphosphate. This is GTP cyclohydrolase FolE2 from Staphylococcus epidermidis (strain ATCC 12228 / FDA PCI 1200).